A 285-amino-acid chain; its full sequence is Putative sugar uptake protein lin0444 (285 aa).

9 consecutive transmembrane segments (helical) span residues 2 to 21, 31 to 50, 55 to 77, 111 to 133, 146 to 168, 172 to 194, 207 to 229, 233 to 255, and 262 to 284; these read SIYL…PIIA, QLLG…FWIL, TVLS…LLQF, WQTV…GVVM, SVSF…YVVT, FDVT…AIGI, VTFN…LATA, VATS…ILIF, and LEWT…LSLL.

Belongs to the GRP transporter (TC 2.A.7.5) family.

The protein localises to the cell membrane. The sequence is that of Putative sugar uptake protein lin0444 from Listeria innocua serovar 6a (strain ATCC BAA-680 / CLIP 11262).